The chain runs to 417 residues: MIDNILFDLIEREAKRERENIELIASENFVSSDVRQAVGSVLTNKYAEGYPSKRYYGGCSVVDDIENLAISRAMELFGASYANVQPHSGSQANMAAIMSLIKPGDKILGMELSHGGHLTHGSKVSFSGMFFDAYSYGVSRDSEMIDYDDVRNIAKACRPNLIIAGASSYSREIDFKKFREIANEVSAYLLCDIAHTAGLVATGFHNSPIDVAHLTTSTTHKTLRGPRGGLILAGKEFNTMINYNNKERTLDLAVNSCVFPGTQGGPLMHVIAGKAVAFKEALNKEFKDYISRVIENTKAMAEYFISEGLRIVSGGTDNHLFLVDLSGLGITGADAEKILESVNITLNKNAIPFDSKNPSVASGIRIGAPAITSRGLNRDDSIKVAHFIIRALKTKSTDELRKIKQEVIGFISSFDMP.

(6S)-5,6,7,8-tetrahydrofolate contacts are provided by residues Leu-112 and 116–118 (GHL). Lys-221 is subject to N6-(pyridoxal phosphate)lysine. A (6S)-5,6,7,8-tetrahydrofolate-binding site is contributed by Glu-247.

The protein belongs to the SHMT family. Homodimer. Pyridoxal 5'-phosphate is required as a cofactor.

It localises to the cytoplasm. It carries out the reaction (6R)-5,10-methylene-5,6,7,8-tetrahydrofolate + glycine + H2O = (6S)-5,6,7,8-tetrahydrofolate + L-serine. The protein operates within one-carbon metabolism; tetrahydrofolate interconversion. It functions in the pathway amino-acid biosynthesis; glycine biosynthesis; glycine from L-serine: step 1/1. Catalyzes the reversible interconversion of serine and glycine with tetrahydrofolate (THF) serving as the one-carbon carrier. This reaction serves as the major source of one-carbon groups required for the biosynthesis of purines, thymidylate, methionine, and other important biomolecules. Also exhibits THF-independent aldolase activity toward beta-hydroxyamino acids, producing glycine and aldehydes, via a retro-aldol mechanism. The sequence is that of Serine hydroxymethyltransferase from Borrelia recurrentis (strain A1).